Consider the following 375-residue polypeptide: Queuine tRNA-ribosyltransferase (375 aa).

The active-site Proton acceptor is the Asp89. Residues 89–93 (DSGGF), Asp143, Gln187, and Gly214 contribute to the substrate site. The interval 245–251 (GVGKPED) is RNA binding. Asp264 serves as the catalytic Nucleophile. Residues 269 to 273 (TRNAR) form an RNA binding; important for wobble base 34 recognition region. The Zn(2+) site is built by Cys302, Cys304, Cys307, and His333.

It belongs to the queuine tRNA-ribosyltransferase family. In terms of assembly, homodimer. Within each dimer, one monomer is responsible for RNA recognition and catalysis, while the other monomer binds to the replacement base PreQ1. The cofactor is Zn(2+).

The enzyme catalyses 7-aminomethyl-7-carbaguanine + guanosine(34) in tRNA = 7-aminomethyl-7-carbaguanosine(34) in tRNA + guanine. Its pathway is tRNA modification; tRNA-queuosine biosynthesis. Catalyzes the base-exchange of a guanine (G) residue with the queuine precursor 7-aminomethyl-7-deazaguanine (PreQ1) at position 34 (anticodon wobble position) in tRNAs with GU(N) anticodons (tRNA-Asp, -Asn, -His and -Tyr). Catalysis occurs through a double-displacement mechanism. The nucleophile active site attacks the C1' of nucleotide 34 to detach the guanine base from the RNA, forming a covalent enzyme-RNA intermediate. The proton acceptor active site deprotonates the incoming PreQ1, allowing a nucleophilic attack on the C1' of the ribose to form the product. After dissociation, two additional enzymatic reactions on the tRNA convert PreQ1 to queuine (Q), resulting in the hypermodified nucleoside queuosine (7-(((4,5-cis-dihydroxy-2-cyclopenten-1-yl)amino)methyl)-7-deazaguanosine). This is Queuine tRNA-ribosyltransferase from Citrobacter koseri (strain ATCC BAA-895 / CDC 4225-83 / SGSC4696).